The chain runs to 66 residues: Omega conotoxin-CVIE (66 aa).

An N-terminal signal peptide occupies residues 1–17 (VVIVAVLLLTACQLITA). Positions 18–40 (NDSRGTQKHRALRSDTKLSMSTR) are excised as a propeptide. 3 disulfides stabilise this stretch: Cys41–Cys56, Cys48–Cys60, and Cys55–Cys65. Cys65 is modified (cysteine amide).

The protein belongs to the conotoxin O1 superfamily. As to expression, expressed by the venom duct.

It localises to the secreted. Functionally, omega-conotoxins act at presynaptic membranes, they bind and block voltage-gated calcium channels. This toxin blocks N-type calcium channels (Cav2.2/CACNA1B). It shows a higher potency when Cav2.2/CACNA1B is only expressed with the ancillary subunit CACNB3 (IC(50)=0.12 nM) than on Cav2.2/CACNA1B expressed with the ancillary subunits CACNA2D1 and CACNB3 (IC(50)=2.6 nM). The Cav2.2/CACNA1B block by this toxin is voltage-independent, whereas the recovery from toxin block is voltage-dependent. There is a low recovery at physiological membrane potential and a high recovery with hyperpolarized potential. This indicates that the toxin has a higher affinity for Cav2.2/CACNA1B in the inactivated state. It is noteworthy that ancillary subunits beta modulate recovery from this toxin block. Cav2.2/CACNA1B expressed with the ancillary subunit CACNB2a (isoform 2a) almost recover completely from this toxin block, whereas Cav2.2/CACNA1B expressed with CACNB3 exhibits relatively weak recovery. Inhibition by this toxin of excitatory synaptic transmission is reversible. In vivo, when tested on rat model of persistent pain, this toxin blocks chronic pain behavior. In Conus catus (Cat cone), this protein is Omega conotoxin-CVIE.